The primary structure comprises 372 residues: UDP-N-acetylglucosamine--N-acetylmuramyl-(pentapeptide) pyrophosphoryl-undecaprenol N-acetylglucosamine transferase (372 aa).

UDP-N-acetyl-alpha-D-glucosamine contacts are provided by residues 16-18 (TGG), asparagine 128, arginine 164, serine 192, isoleucine 250, and glutamine 295.

It belongs to the glycosyltransferase 28 family. MurG subfamily.

The protein localises to the cell inner membrane. The enzyme catalyses di-trans,octa-cis-undecaprenyl diphospho-N-acetyl-alpha-D-muramoyl-L-alanyl-D-glutamyl-meso-2,6-diaminopimeloyl-D-alanyl-D-alanine + UDP-N-acetyl-alpha-D-glucosamine = di-trans,octa-cis-undecaprenyl diphospho-[N-acetyl-alpha-D-glucosaminyl-(1-&gt;4)]-N-acetyl-alpha-D-muramoyl-L-alanyl-D-glutamyl-meso-2,6-diaminopimeloyl-D-alanyl-D-alanine + UDP + H(+). Its pathway is cell wall biogenesis; peptidoglycan biosynthesis. Its function is as follows. Cell wall formation. Catalyzes the transfer of a GlcNAc subunit on undecaprenyl-pyrophosphoryl-MurNAc-pentapeptide (lipid intermediate I) to form undecaprenyl-pyrophosphoryl-MurNAc-(pentapeptide)GlcNAc (lipid intermediate II). In Paraburkholderia xenovorans (strain LB400), this protein is UDP-N-acetylglucosamine--N-acetylmuramyl-(pentapeptide) pyrophosphoryl-undecaprenol N-acetylglucosamine transferase.